We begin with the raw amino-acid sequence, 109 residues long: Peptide chaperone MftB (109 aa).

The protein belongs to the peptide chaperone MftB family. As to quaternary structure, interacts with MftA and MftC.

In terms of biological role, peptide chaperone involved in the biosynthesis of the enzyme cofactor mycofactocin (MFT). Binds MftA and MftC with high affinity, and is essential for MftC activity on MftA, likely via the formation of a ternary complex. This Mycobacterium ulcerans (strain Agy99) protein is Peptide chaperone MftB.